A 300-amino-acid polypeptide reads, in one-letter code: Hydroxyquinol 1,2-dioxygenase (300 aa).

Residues Tyr167, Tyr200, His224, and His226 each contribute to the Fe cation site.

This sequence belongs to the intradiol ring-cleavage dioxygenase family. The cofactor is Fe(3+).

The enzyme catalyses benzene-1,2,4-triol + O2 = maleylacetate + 2 H(+). The protein operates within aromatic compound metabolism. It functions in the pathway xenobiotic degradation. Involved in the degradation of para-nitrophenol (4-NP). Catalyzes the conversion of hydroxyquinol to malelylacetate. This chain is Hydroxyquinol 1,2-dioxygenase (npcC), found in Rhodococcus opacus (Nocardia opaca).